A 158-amino-acid chain; its full sequence is 2-C-methyl-D-erythritol 2,4-cyclodiphosphate synthase (158 aa).

The a divalent metal cation site is built by D8 and H10. 4-CDP-2-C-methyl-D-erythritol 2-phosphate is bound by residues 8–10 (DVH) and 34–35 (HS). Residue H42 participates in a divalent metal cation binding. Residues 56–58 (DIG), 61–65 (FPDTD), 100–106 (AQVPKMA), 132–135 (TTTE), F139, and R142 contribute to the 4-CDP-2-C-methyl-D-erythritol 2-phosphate site.

It belongs to the IspF family. As to quaternary structure, homotrimer. A divalent metal cation is required as a cofactor.

The catalysed reaction is 4-CDP-2-C-methyl-D-erythritol 2-phosphate = 2-C-methyl-D-erythritol 2,4-cyclic diphosphate + CMP. It functions in the pathway isoprenoid biosynthesis; isopentenyl diphosphate biosynthesis via DXP pathway; isopentenyl diphosphate from 1-deoxy-D-xylulose 5-phosphate: step 4/6. In terms of biological role, involved in the biosynthesis of isopentenyl diphosphate (IPP) and dimethylallyl diphosphate (DMAPP), two major building blocks of isoprenoid compounds. Catalyzes the conversion of 4-diphosphocytidyl-2-C-methyl-D-erythritol 2-phosphate (CDP-ME2P) to 2-C-methyl-D-erythritol 2,4-cyclodiphosphate (ME-CPP) with a corresponding release of cytidine 5-monophosphate (CMP). This Sodalis glossinidius (strain morsitans) protein is 2-C-methyl-D-erythritol 2,4-cyclodiphosphate synthase.